Here is a 309-residue protein sequence, read N- to C-terminus: MKQMNKLITGVVTLATVVTLSACQSSHNNTKLVSMKGDTITVSDFYNETKNTELAQKAMLSLVISRVFETQYANKVSDKEVEKAYKQTADQYGTSFKTVLAQSGLTPETYKKQIRLTKLVEYAVKEQAKNETISKKDYRQAYDAYTPTMTAEIMQFEKEEDAKAALEAVKAEGADFAAIAKEKTIAADKKTTYTFDSGETTLPAEVVRAASGLKEGNRSEIITALDPAISKRTYHIIKVTKKATKKADWKAYQKRLKDIIVTGKLKDPDFQNKVIAKALDKANVKIKDKAFANILAQFAKPNQKQPAQK.

An N-terminal signal peptide occupies residues 1-22 (MKQMNKLITGVVTLATVVTLSA). C23 carries the N-palmitoyl cysteine lipid modification. The S-diacylglycerol cysteine moiety is linked to residue C23. Positions 146-241 (TPTMTAEIMQ…RTYHIIKVTK (96 aa)) constitute a PpiC domain.

The protein belongs to the PrsA family.

Its subcellular location is the cell membrane. It catalyses the reaction [protein]-peptidylproline (omega=180) = [protein]-peptidylproline (omega=0). Its function is as follows. Plays a major role in protein secretion by helping the post-translocational extracellular folding of several secreted proteins. This chain is Foldase protein PrsA 2, found in Streptococcus pyogenes serotype M6 (strain ATCC BAA-946 / MGAS10394).